A 472-amino-acid polypeptide reads, in one-letter code: tRNA-2-methylthio-N(6)-dimethylallyladenosine synthase (472 aa).

The MTTase N-terminal domain occupies 22–142 (RKVFVKTYGC…LPDALKRARA (121 aa)). Residues Cys31, Cys67, Cys105, Cys183, Cys187, and Cys190 each coordinate [4Fe-4S] cluster. In terms of domain architecture, Radical SAM core spans 169–403 (RARGVTAFLT…LLVKQQRGFA (235 aa)). The TRAM domain occupies 404-466 (EACVGREIDL…PNSLFAEMIG (63 aa)).

Belongs to the methylthiotransferase family. MiaB subfamily. As to quaternary structure, monomer. The cofactor is [4Fe-4S] cluster.

It is found in the cytoplasm. It catalyses the reaction N(6)-dimethylallyladenosine(37) in tRNA + (sulfur carrier)-SH + AH2 + 2 S-adenosyl-L-methionine = 2-methylsulfanyl-N(6)-dimethylallyladenosine(37) in tRNA + (sulfur carrier)-H + 5'-deoxyadenosine + L-methionine + A + S-adenosyl-L-homocysteine + 2 H(+). Catalyzes the methylthiolation of N6-(dimethylallyl)adenosine (i(6)A), leading to the formation of 2-methylthio-N6-(dimethylallyl)adenosine (ms(2)i(6)A) at position 37 in tRNAs that read codons beginning with uridine. The sequence is that of tRNA-2-methylthio-N(6)-dimethylallyladenosine synthase from Rhizobium meliloti (strain 1021) (Ensifer meliloti).